The primary structure comprises 520 residues: Anthranilate synthase component 1 (520 aa).

Residues Ser-40, Lys-50, and 291 to 293 (PYM) contribute to the L-tryptophan site. 328 to 329 (GT) is a chorismate binding site. Glu-361 provides a ligand contact to Mg(2+). Chorismate is bound by residues Tyr-449, Arg-469, 483-485 (GAG), and Gly-485. Glu-498 contributes to the Mg(2+) binding site.

This sequence belongs to the anthranilate synthase component I family. As to quaternary structure, homodimer. In fact, exists in a monomer-dimer equilibrium in solution, shifted spontaneously in favor of the dimer; the monomer has a reduced activity compared with the dimer. Heterotetramer consisting of two non-identical subunits: a beta subunit (TrpG) and a large alpha subunit (TrpE) (Potential). The cofactor is Mg(2+).

It catalyses the reaction chorismate + L-glutamine = anthranilate + pyruvate + L-glutamate + H(+). It participates in amino-acid biosynthesis; L-tryptophan biosynthesis; L-tryptophan from chorismate: step 1/5. With respect to regulation, cooperatively feedback inhibited by tryptophan. In terms of biological role, part of a heterotetrameric complex that catalyzes the two-step biosynthesis of anthranilate, an intermediate in the biosynthesis of L-tryptophan. In the first step, the glutamine-binding beta subunit (TrpG) of anthranilate synthase (AS) provides the glutamine amidotransferase activity which generates ammonia as a substrate that, along with chorismate, is used in the second step, catalyzed by the large alpha subunit of AS (TrpE) to produce anthranilate. In the absence of TrpG, TrpE can synthesize anthranilate directly from chorismate and high concentrations of ammonia. The sequence is that of Anthranilate synthase component 1 (trpE) from Salmonella typhimurium (strain LT2 / SGSC1412 / ATCC 700720).